A 67-amino-acid polypeptide reads, in one-letter code: Penaeidin-4a (67 aa).

Positions 1–19 (MRLVVCLVFLASFALVCQG) are cleaved as a signal peptide. Disulfide bonds link Cys-42-Cys-56, Cys-45-Cys-63, and Cys-57-Cys-64. Arg-66 carries the arginine amide modification.

The protein belongs to the penaeidin family.

The protein localises to the cytoplasmic granule. Its function is as follows. Antibacterial and antifungal activity. Presents chitin-binding activity. This chain is Penaeidin-4a, found in Penaeus vannamei (Whiteleg shrimp).